The following is a 377-amino-acid chain: MRVSAFALLAAAATAAATSVQGAAEGFAKGVTGGGSATPVYPTTTDELVSYLGDDEARVIVLTKTFDFRGTEGTTTAKGCSPWGTASGCQLAINKDGWCDNYQPDAPQTTITYDTAGMLGITVKSNKSLIGQGTAGVIKGKGIRIVNGAKNVIVQNIAITDINPQYVWGGDAITLNDVDMVWIDHVTTARIARQHIVLGTNACNRVTISNNYFNGVSDYSATCDGYHYWGLYLDGSNDMVTLQGNYIHHFSGRSPKVGGNTLLHAVNNYWYDSTGHAFEIAAGSSVLAEGNVFQNINAPVESSSLAGNLFTSPDSNTNKVCSSYLGHTCQLNAFGSSGSFNQADEGFLVNFKGKNVASADAYSAAQSVPNNAGQGKL.

Residues 1–17 form the signal peptide; it reads MRVSAFALLAAAATAAA. Cystine bridges form between Cys80–Cys99 and Cys89–Cys223. The N-linked (GlcNAc...) asparagine glycan is linked to Asn126. Arg253 is an active-site residue. A disulfide bond links Cys321 and Cys329.

This sequence belongs to the polysaccharide lyase 1 family.

Its subcellular location is the secreted. The enzyme catalyses Eliminative cleavage of (1-&gt;4)-alpha-D-galacturonan methyl ester to give oligosaccharides with 4-deoxy-6-O-methyl-alpha-D-galact-4-enuronosyl groups at their non-reducing ends.. Its function is as follows. Pectinolytic enzymes consist of four classes of enzymes: pectin lyase, polygalacturonase, pectin methylesterase and rhamnogalacturonase. Among pectinolytic enzymes, pectin lyase is the most important in depolymerization of pectin, since it cleaves internal glycosidic bonds of highly methylated pectins. This Emericella nidulans (strain FGSC A4 / ATCC 38163 / CBS 112.46 / NRRL 194 / M139) (Aspergillus nidulans) protein is Probable pectin lyase D (pelD).